Reading from the N-terminus, the 61-residue chain is Metallothionein (61 aa).

The residue at position 1 (methionine 1) is an N-acetylmethionine. The beta stretch occupies residues 1-29 (MDPNCSCAAGGSCTCAGSCKCKECKCTSC). Positions 5, 7, 13, 15, 19, 21, 24, 26, 29, 33, 34, 36, 37, 41, 44, 48, 50, 57, 59, and 60 each coordinate a divalent metal cation. The tract at residues 30–61 (KKSCCSCCPPGCTKCAQGCVCKGASDKCNCCA) is alpha.

It belongs to the metallothionein superfamily. Type 1 family. As to quaternary structure, monomer.

Its function is as follows. Metallothioneins have a high content of cysteine residues that bind various heavy metals. This is Metallothionein from Balaena mysticetus (Bowhead whale).